Consider the following 395-residue polypeptide: Succinyl-diaminopimelate desuccinylase (395 aa).

His74 contributes to the Zn(2+) binding site. The active site involves Asp76. Zn(2+) is bound at residue Asp107. Glu141 (proton acceptor) is an active-site residue. Zn(2+) is bound by residues Glu142, Glu170, and His368.

This sequence belongs to the peptidase M20A family. DapE subfamily. As to quaternary structure, homodimer. Zn(2+) is required as a cofactor. Requires Co(2+) as cofactor.

The enzyme catalyses N-succinyl-(2S,6S)-2,6-diaminopimelate + H2O = (2S,6S)-2,6-diaminopimelate + succinate. It functions in the pathway amino-acid biosynthesis; L-lysine biosynthesis via DAP pathway; LL-2,6-diaminopimelate from (S)-tetrahydrodipicolinate (succinylase route): step 3/3. Functionally, catalyzes the hydrolysis of N-succinyl-L,L-diaminopimelic acid (SDAP), forming succinate and LL-2,6-diaminopimelate (DAP), an intermediate involved in the bacterial biosynthesis of lysine and meso-diaminopimelic acid, an essential component of bacterial cell walls. In Brucella melitensis biotype 1 (strain ATCC 23456 / CCUG 17765 / NCTC 10094 / 16M), this protein is Succinyl-diaminopimelate desuccinylase.